The sequence spans 130 residues: Small ribosomal subunit protein uS9 (130 aa).

The disordered stretch occupies residues 104-130; that stretch reads LTRDPRMKERRKYGLKKARKAPQFSKR. Basic residues predominate over residues 111–130; sequence KERRKYGLKKARKAPQFSKR.

This sequence belongs to the universal ribosomal protein uS9 family.

In Moorella thermoacetica (strain ATCC 39073 / JCM 9320), this protein is Small ribosomal subunit protein uS9.